The chain runs to 851 residues: Protein NUD1 (851 aa).

Disordered regions lie at residues 1-31 and 216-352; these read MDMD…NAHS and LVGS…KAPS. The segment covering 8 to 21 has biased composition (polar residues); sequence AELSSQLENLTINS. Composition is skewed to low complexity over residues 223-246 and 260-278; these read NSNN…INNK and SNSF…QTQS. Positions 291–304 are enriched in polar residues; the sequence is NTISPGQLGYQFNH. Low complexity predominate over residues 320–333; the sequence is SSSHSLDNTSSNQS. Residue Lys357 forms a Glycyl lysine isopeptide (Lys-Gly) (interchain with G-Cter in ubiquitin) linkage. Phosphothreonine occurs at positions 388 and 392. Ser417 and Ser419 each carry phosphoserine. LRR repeat units lie at residues 544-566, 567-588, 589-609, 621-642, and 643-664; these read DLEC…SLCH, HLQE…GSSR, MKKL…EQLI, TVEV…NCLP, and RLKV…SKME.

In terms of assembly, interacts directly with MPC54, CNM67, SPO21/MPC70, ADY3 and ADY4. Probable component of a spindle pole boby (SPB) complex composed of ADY3, SSP1, DON1, MPC54, SPO21/MPC70, NUD1 and CNM67. In terms of processing, phosphorylated from S/G2 phase until the end of mitosis.

It is found in the cytoplasm. It localises to the cytoskeleton. The protein localises to the microtubule organizing center. Its subcellular location is the spindle pole body. The protein resides in the nucleus envelope. Involved in astral microtubule organization by binding SCP72 to the outer plaque in a cell-cycle dependent manner. Required for the mitotic exit by facilitating the binding of TEMP1 to CDC15. Also involved in the pathway that organizes the shaping and sizing of the prospore membrane (PSM) during sporulation. This Saccharomyces cerevisiae (strain ATCC 204508 / S288c) (Baker's yeast) protein is Protein NUD1 (NUD1).